The following is a 247-amino-acid chain: Ribosomal RNA small subunit methyltransferase G (247 aa).

Residues Gly-86, Leu-91, and Arg-154 each coordinate S-adenosyl-L-methionine.

This sequence belongs to the methyltransferase superfamily. RNA methyltransferase RsmG family.

The protein resides in the cytoplasm. In terms of biological role, specifically methylates the N7 position of a guanine in 16S rRNA. This Leptospira biflexa serovar Patoc (strain Patoc 1 / Ames) protein is Ribosomal RNA small subunit methyltransferase G.